Consider the following 523-residue polypeptide: Spastin (523 aa).

The Cytoplasmic segment spans residues 1-41 (MLDKLSKHKTMFYERVKEIDQILFSQQQAKQTQLDNLSNNN). The helical intramembrane region spans 42 to 58 (ASGGFFSGFMKMFSPLS). 3 stretches are compositionally biased toward low complexity: residues 57–71 (LSTP…NSNT), 171–184 (QQPP…QQQP), and 193–210 (TALR…TANN). 2 disordered regions span residues 57–77 (LSTP…AISQ) and 129–218 (GISS…LDQI). The Cytoplasmic segment spans residues 59-523 (TPPNSSSNNN…ESYGTFAKGI (465 aa)).

This sequence belongs to the AAA ATPase family. Spastin subfamily. As to quaternary structure, homohexamer. The homohexamer is stabilized by ATP-binding. The homohexamer may adopt a ring conformation through which microtubules pass prior to being severed.

It localises to the membrane. The catalysed reaction is n ATP + n H2O + a microtubule = n ADP + n phosphate + (n+1) alpha/beta tubulin heterodimers.. ATP-dependent microtubule severing protein. Stimulates microtubule minus-end depolymerization and poleward microtubule flux in the mitotic spindle. This Naegleria gruberi (Amoeba) protein is Spastin.